Reading from the N-terminus, the 97-residue chain is Large ribosomal subunit protein bL25 (97 aa).

It belongs to the bacterial ribosomal protein bL25 family. As to quaternary structure, part of the 50S ribosomal subunit; part of the 5S rRNA/L5/L18/L25 subcomplex. Contacts the 5S rRNA. Binds to the 5S rRNA independently of L5 and L18.

Its function is as follows. This is one of the proteins that binds to the 5S RNA in the ribosome where it forms part of the central protuberance. In Blochmanniella pennsylvanica (strain BPEN), this protein is Large ribosomal subunit protein bL25.